Consider the following 1504-residue polypeptide: MLEINDFSAIRISLASPEDILSWSHGEVTKPETINYRTLKPERDGLFCERIFGPTKDWECYCGKYKRVRYKGVVCDKCGVEVTRSKVRRERMGHISLASPVSHIWFVKGTPSRLGLLLDISPRNLERVLYFASYMIVHVDEELKAQAREALQAEYREKRERIQQEAESKQIELSTQLTQDLGGMESAQITTQRRIEEEYRRLRDEISAEAERLRSDLEEKQGEAAEEDILFRGTVLIEEGEIITEKTLDALDELLDQELETLEQRKQRDLEDAEQLTGAERERKEYEASQERERLQERLQSELDRLVREEKERLEQIDSIKLKRILSEQEYRALREIAPGVFRADMGAGAVRDMIVRTIDLDKLAEELQNEVYTTQGQRRKKATKRLRVVEAFRKSGNRPEWMILTVLPVIPPDLRPMVQLDGGRFATSDLNDLYRRVINRNNRLKRLMELNAPEIIVRNEKRMLQEAVDALIDNGRRGRAVSGKGKHRLKSLSDMLKGKQGRFRQNLLGKRVDYSGRSVIVVGPDLKLHQCGLPKKMALELFKPFVMRRLVEKGFAHNIKSAKRIVERVRPEVWDVLEEVIKDYLVLLNRAPSLHRLSIQAFEAKLIEGSAIQLHPLVCAAFNADFDGDQMAVHVPLSRKAQEEARMRMLSKYNLLSPATGDPIITPSQDIVLGCYYLTMVKDGAKGSGKMFASIDEALLAYDKGLIDIQAPIFVRMTGTVYGESDRPVRMLSPDENGAPRMLLETTIGRIIFNNELLEPLRFRNRLIAKKGLREIIADCYKYYTNLNNLTEADLDTIRAMYGDRPRDDLARYFGSEMTASQADRIKTLGFRYATRGGMTIGVDDIEIPPKKQDILAEAEKRVTEVERQFRRGLITEEERYREIVEIWQNATKQTTEAVKQHLNPFGPVAMMVNSAARGNINQLSQMAGMRGLMSDPTGRIIELPIKSNFREGLSVLEYFVSTHGGRKGLADTALRTADAGYLTRRLIDVAQDNIVTIDDCGTDEGLWIYRADDREVLQDFEQRILGRLLAAPLVDPRTGEILANRNDEIDEALVRKCKELAIDAVYVRSPLACKADYGICRMCYGRNLATGKLVDIGEAVGIIAAQSIGEPGTQLTLRTFHTGGVASADDITQGLPRVQEIFEARTPKGKAILAEIDGIVELVREDEVRKIRVVATELYTDDHELPPHYEPVVADGAQVNEGDVLAQSNRADLNGEPIVARIAGVVRIGAGQISVINEEREVREVVAPHTARLAPGIENGARVVAGQHLTEGSADPQELLALQGREAVQRYLVNEAQKVYRSQGVDINDKHIEVIVRQMLRRVRIEEPGDTDYLPGELIDSTEFVRKNAEIISQGGEPATASTMLLGITKASLTTDSFLAAASFQETTRVLTEAAITGKVDYLRGLKENVVIGKLIPAGTGIEKRRQLAEEIIGELANVAPATSTAVVEQERPDREADEALRRRLRALIGGDGDDGERNNGDFDDQVGEDVVIPPDDDDQEA.

The Zn(2+) site is built by C60, C62, C75, and C78. The disordered stretch occupies residues R265–R294. The segment covering A279 to R294 has biased composition (basic and acidic residues). D626, D628, and D630 together coordinate Mg(2+). The Zn(2+) site is built by C1002, C1075, C1082, and C1085. Residues R1468 to A1504 are disordered.

The protein belongs to the RNA polymerase beta' chain family. The RNAP catalytic core consists of 2 alpha, 1 beta, 1 beta' and 1 omega subunit. When a sigma factor is associated with the core the holoenzyme is formed, which can initiate transcription. Mg(2+) serves as cofactor. It depends on Zn(2+) as a cofactor.

The catalysed reaction is RNA(n) + a ribonucleoside 5'-triphosphate = RNA(n+1) + diphosphate. Its function is as follows. DNA-dependent RNA polymerase catalyzes the transcription of DNA into RNA using the four ribonucleoside triphosphates as substrates. The sequence is that of DNA-directed RNA polymerase subunit beta' from Roseiflexus sp. (strain RS-1).